A 357-amino-acid polypeptide reads, in one-letter code: DNA replication and repair protein RecF (357 aa).

An ATP-binding site is contributed by 31–38 (GQNGAGKT).

It belongs to the RecF family.

It is found in the cytoplasm. In terms of biological role, the RecF protein is involved in DNA metabolism; it is required for DNA replication and normal SOS inducibility. RecF binds preferentially to single-stranded, linear DNA. It also seems to bind ATP. The protein is DNA replication and repair protein RecF of Coxiella burnetii (strain Dugway 5J108-111).